We begin with the raw amino-acid sequence, 98 residues long: Acylphosphatase (98 aa).

Residues 12–98 (TYYVRVRGVV…ERRFDRFQQQ (87 aa)) enclose the Acylphosphatase-like domain. Active-site residues include Arg27 and Asn45.

This sequence belongs to the acylphosphatase family.

It carries out the reaction an acyl phosphate + H2O = a carboxylate + phosphate + H(+). The sequence is that of Acylphosphatase (acyP) from Burkholderia ambifaria (strain ATCC BAA-244 / DSM 16087 / CCUG 44356 / LMG 19182 / AMMD) (Burkholderia cepacia (strain AMMD)).